Reading from the N-terminus, the 269-residue chain is Putative pyruvate, phosphate dikinase regulatory protein (269 aa).

151–158 (GISRTSKT) contributes to the ADP binding site.

It belongs to the pyruvate, phosphate/water dikinase regulatory protein family. PDRP subfamily.

The enzyme catalyses N(tele)-phospho-L-histidyl/L-threonyl-[pyruvate, phosphate dikinase] + ADP = N(tele)-phospho-L-histidyl/O-phospho-L-threonyl-[pyruvate, phosphate dikinase] + AMP + H(+). It carries out the reaction N(tele)-phospho-L-histidyl/O-phospho-L-threonyl-[pyruvate, phosphate dikinase] + phosphate + H(+) = N(tele)-phospho-L-histidyl/L-threonyl-[pyruvate, phosphate dikinase] + diphosphate. Bifunctional serine/threonine kinase and phosphorylase involved in the regulation of the pyruvate, phosphate dikinase (PPDK) by catalyzing its phosphorylation/dephosphorylation. The polypeptide is Putative pyruvate, phosphate dikinase regulatory protein (Staphylococcus aureus).